The primary structure comprises 300 residues: MNKQKVCPACESAELIYDPERGEIVCAKCGYVIEENIIDMGPEWRAFDASQRERRSRTGAPESILLHDKGLSTEIGIDRSLSGLMREKMYRLRKWQSRLRVSDAAERNLAFALSELDRITAQLKLPRHVEEEAARLYREAVRKGLIRGRSIESVMAACVYAACRLLKVPRTLDEIADIARVDKKEIGRSYRFIARNLNLTPKKLFVKPTDYVNKFADELGLSEKVRRRAIEILDEAYKRGLTSGKSPAGLVAAALYIASLLEGEKRTQREVAEVARVTEVTVRNRYKELVEKLKIKVPIA.

Residues 2–34 form a TFIIB-type zinc finger; sequence NKQKVCPACESAELIYDPERGEIVCAKCGYVIE. Zn(2+) is bound by residues Cys7, Cys10, Cys26, and Cys29. A run of 2 repeats spans residues 114–197 and 210–291.

Belongs to the TFIIB family.

Functionally, stabilizes TBP binding to an archaeal box-A promoter. Also responsible for recruiting RNA polymerase II to the pre-initiation complex (DNA-TBP-TFIIB). The protein is Transcription initiation factor IIB of Pyrococcus furiosus (strain ATCC 43587 / DSM 3638 / JCM 8422 / Vc1).